A 133-amino-acid chain; its full sequence is Gamma-crystallin 1 (133 aa).

The Beta/gamma crystallin 'Greek key' 2 domain maps to 1–41; that stretch reads WMLYEHPNYTGHQYFLRRGEYPDFQQWMGLNDSIRSCRVIP. The connecting peptide stretch occupies residues 42–46; the sequence is QHRGS. 2 Beta/gamma crystallin 'Greek key' domains span residues 47-87 and 88-130; these read FRLR…NVLE and GHWI…RRVQ.

The protein belongs to the beta/gamma-crystallin family. Monomer.

Crystallins are the dominant structural components of the vertebrate eye lens. The sequence is that of Gamma-crystallin 1 from Rana temporaria (European common frog).